Here is a 146-residue protein sequence, read N- to C-terminus: Ribonuclease H (146 aa).

Positions 1–141 (MKHVDIFTDG…ADELARKGME (141 aa)) constitute an RNase H type-1 domain. Positions 9, 47, 69, and 133 each coordinate Mg(2+). Residues 123–146 (HAGHPENERADELARKGMEPFKRR) are disordered. Over residues 125–146 (GHPENERADELARKGMEPFKRR) the composition is skewed to basic and acidic residues.

Belongs to the RNase H family. In terms of assembly, monomer. Mg(2+) is required as a cofactor.

The protein resides in the cytoplasm. The enzyme catalyses Endonucleolytic cleavage to 5'-phosphomonoester.. Endonuclease that specifically degrades the RNA of RNA-DNA hybrids. This is Ribonuclease H from Agrobacterium fabrum (strain C58 / ATCC 33970) (Agrobacterium tumefaciens (strain C58)).